A 57-amino-acid chain; its full sequence is uncharacterized protein (57 aa).

The segment at V26–Y57 is disordered. The segment covering S46 to Y57 has biased composition (acidic residues).

This is an uncharacterized protein from Autographa californica nuclear polyhedrosis virus (AcMNPV).